Consider the following 662-residue polypeptide: U6 snRNA-specific terminal uridylyltransferase (662 aa).

Residues D183 and D185 each coordinate Mg(2+). A PAP-associated domain is found at 384 to 437 (CKFFRELFKYYANFDFTNKAIYGKKAMQKKTLSSAHGGVEESPLMLMDPMDITH).

It belongs to the DNA polymerase type-B-like family. In terms of assembly, forms a complex composed of sart-3, terminal uridylyltransferase usip-1 and U6 snRNA; complex formation is mediated by usip-1 and sart-3 binding to U6 snRNA. Mg(2+) serves as cofactor. Requires Mn(2+) as cofactor. In terms of tissue distribution, ubiquitously expressed.

Its subcellular location is the nucleus. It is found in the nucleoplasm. It catalyses the reaction RNA(n) + UTP = RNA(n)-3'-uridine ribonucleotide + diphosphate. Functionally, acts as a specific terminal uridylyltransferase for U6 snRNA. Responsible for the addition of UTP at the 3' end of U6 snRNA which stabilizes U6 snRNA. Does not have activity towards modified uridine containing 3'-monophosphorylation or 2'-O-methylation. The sequence is that of U6 snRNA-specific terminal uridylyltransferase from Caenorhabditis elegans.